We begin with the raw amino-acid sequence, 688 residues long: Lipase (688 aa).

A signal peptide spans 1-35 (MKTRQNKYSIRKFSVGASSILIAALLFMGGGSAQA). Residues 31-309 (GSAQAAEQQQ…KSAKQKQYKN (279 aa)) are disordered. Positions 36–302 (AEQQQDKGTV…KNEDQTNKSA (267 aa)) are cleaved as a propeptide — removed in mature form. The span at 45 to 54 (VENSTTQSIG) shows a compositional bias: polar residues. Positions 68–79 (NKNVNEKSNVNS) are enriched in low complexity. 3 stretches are compositionally biased toward basic and acidic residues: residues 84–95 (ESLHNETPKNED), 103–117 (SQNDNKSESVVEQNK), and 126–143 (HSEEKPQQEQVELEKHAS). The span at 144–172 (ENNQTLHSKAAQSNEDVKTKPSQLDNTAA) shows a compositional bias: polar residues. Over residues 173–183 (KQEDSQKENLS) the composition is skewed to basic and acidic residues. Residues 184-211 (KQDTQSSKTTDLLRATAQNQSKDSQSTE) show a composition bias toward polar residues. Residues 240–267 (SKEEPLKVDKQANPTTDKDKSSKNDKGS) show a composition bias toward basic and acidic residues. Residues 274–289 (LESNAVATTNKQSKQQ) are compositionally biased toward polar residues. Serine 418 (nucleophile) is an active-site residue. Aspartate 609 acts as the Charge relay system in catalysis. Aspartate 647 provides a ligand contact to Ca(2+). The active-site Charge relay system is the histidine 648. Ca(2+) contacts are provided by aspartate 650, aspartate 655, and aspartate 658.

This sequence belongs to the AB hydrolase superfamily. Lipase family.

Its subcellular location is the secreted. It catalyses the reaction a triacylglycerol + H2O = a diacylglycerol + a fatty acid + H(+). The chain is Lipase (lip) from Staphylococcus epidermidis.